We begin with the raw amino-acid sequence, 194 residues long: Small ribosomal subunit protein uS5 (194 aa).

The S5 DRBM domain maps to 26-89 (LEEKVVEIRR…ADAKKHLIRV (64 aa)).

Belongs to the universal ribosomal protein uS5 family. Part of the 30S ribosomal subunit. Contacts proteins S4 and S8.

With S4 and S12 plays an important role in translational accuracy. Its function is as follows. Located at the back of the 30S subunit body where it stabilizes the conformation of the head with respect to the body. In Persephonella marina (strain DSM 14350 / EX-H1), this protein is Small ribosomal subunit protein uS5.